The sequence spans 42 residues: MRDLKTYLSVAPVLSTLWFVALAGLLIEINRFFPDALTFPFF.

A helical transmembrane segment spans residues 7–27; the sequence is YLSVAPVLSTLWFVALAGLLI.

It belongs to the PsaJ family.

It is found in the plastid. The protein localises to the chloroplast thylakoid membrane. Functionally, may help in the organization of the PsaE and PsaF subunits. The chain is Photosystem I reaction center subunit IX from Atropa belladonna (Belladonna).